The following is a 40-amino-acid chain: Large ribosomal subunit protein bL36B (40 aa).

It belongs to the bacterial ribosomal protein bL36 family.

The polypeptide is Large ribosomal subunit protein bL36B (Clavibacter michiganensis subsp. michiganensis (strain NCPPB 382)).